Here is a 396-residue protein sequence, read N- to C-terminus: Transcriptional regulator Myc-B (396 aa).

A glycan (O-linked (GlcNAc) threonine) is linked at T56. The 9aaTAD signature appears at 79–87; it reads EMVSEFLGD. 2 disordered regions span residues 183 to 251 and 298 to 318; these read KPCK…THQS and NRKCASPRTSDSEDNDKRRTH. Positions 191-212 are enriched in low complexity; it reads PASTTLPLDTPPNSGSSSSSSD. Positions 213-230 are enriched in acidic residues; that stretch reads SESDDEDDEDEEEEEEID. A compositionally biased stretch (basic and acidic residues) spans 233-244; it reads TVEKRKSVKKSD. The 53-residue stretch at 313–365 folds into the bHLH domain; that stretch reads DKRRTHNVLERQRRNELKLSFFALRDVIPDVANNEKAAKVVILKKATECIASM. The tract at residues 372–393 is leucine-zipper; the sequence is LISLKEQLRRKCEHLKQRLEQL.

In terms of assembly, efficient DNA binding requires dimerization with another bHLH protein. Binds DNA as a heterodimer with max.

It localises to the nucleus. Its function is as follows. Transcription factor that binds DNA in a non-specific manner, yet also specifically recognizes the core sequence 5'-CAC[GA]TG-3'. Activates the transcription of growth-related genes. The polypeptide is Transcriptional regulator Myc-B (Danio rerio (Zebrafish)).